The chain runs to 93 residues: Acylphosphatase (93 aa).

Positions 5 to 93 (CIIAWVHGRV…EELTGFRIRY (89 aa)) constitute an Acylphosphatase-like domain. Residues arginine 20 and asparagine 38 contribute to the active site.

This sequence belongs to the acylphosphatase family.

The catalysed reaction is an acyl phosphate + H2O = a carboxylate + phosphate + H(+). The chain is Acylphosphatase (acyP) from Citrobacter koseri (strain ATCC BAA-895 / CDC 4225-83 / SGSC4696).